Reading from the N-terminus, the 411-residue chain is Allantoate amidohydrolase (411 aa).

The Zn(2+) site is built by His-81, Asp-92, Glu-127, and His-190. 3 residues coordinate allantoate: Arg-215, Asn-275, and Arg-288. His-382 contacts Zn(2+).

Belongs to the peptidase M20 family. As to quaternary structure, homodimer. The cofactor is Zn(2+).

It is found in the cytoplasm. The catalysed reaction is allantoate + H2O + 2 H(+) = (S)-2-ureidoglycine + NH4(+) + CO2. It functions in the pathway nitrogen metabolism; (S)-allantoin degradation. Sulfate could be an allosteric effector of the enzyme that is responsible for stabilizing substrate binding. In addition, this anion effector may act as a counterion during enzyme-mediated catalysis. In terms of biological role, involved in the anaerobic nitrogen utilization via the assimilation of allantoin. Catalyzes specifically the hydrolysis of allantoate to yield CO2, NH3 and S-ureidoglycine, which is unstable and readily undergoes a second deamination by S-ureidoglycine aminohydrolase AllE to yield S-ureidoglycolate and NH3. In vivo, the spontaneous release of S-ureidoglycolate and ammonia from S-ureidoglycine appears to be too slow to sustain an efficient flux of nitrogen. The chain is Allantoate amidohydrolase from Escherichia coli (strain K12).